The sequence spans 157 residues: MAEKKNEQEIQQELQRLIAEINRLQGQMEAINAQIDLIESSISELNRVEETLKGVKELEGDEEVLVPVGAQSFVRACVTDTERVIVGIGAGVAVERTIDEALESIDDQRQELEKARAEAQQKLQELAQELQEKQRKAQELAQQLEGAQRIAQQSGGG.

Belongs to the prefoldin subunit alpha family. Heterohexamer of two alpha and four beta subunits.

It localises to the cytoplasm. Its function is as follows. Molecular chaperone capable of stabilizing a range of proteins. Seems to fulfill an ATP-independent, HSP70-like function in archaeal de novo protein folding. The polypeptide is Prefoldin subunit alpha (Methanopyrus kandleri (strain AV19 / DSM 6324 / JCM 9639 / NBRC 100938)).